Reading from the N-terminus, the 241-residue chain is Demethylmenaquinone methyltransferase (241 aa).

S-adenosyl-L-methionine is bound by residues threonine 60, aspartate 81, and 106-107; that span reads DA.

It belongs to the class I-like SAM-binding methyltransferase superfamily. MenG/UbiE family.

The enzyme catalyses a 2-demethylmenaquinol + S-adenosyl-L-methionine = a menaquinol + S-adenosyl-L-homocysteine + H(+). It participates in quinol/quinone metabolism; menaquinone biosynthesis; menaquinol from 1,4-dihydroxy-2-naphthoate: step 2/2. Methyltransferase required for the conversion of demethylmenaquinol (DMKH2) to menaquinol (MKH2). In Staphylococcus aureus (strain Mu3 / ATCC 700698), this protein is Demethylmenaquinone methyltransferase.